Reading from the N-terminus, the 286-residue chain is Formamidopyrimidine-DNA glycosylase (286 aa).

Proline 2 serves as the catalytic Schiff-base intermediate with DNA. Glutamate 3 acts as the Proton donor in catalysis. Catalysis depends on lysine 60, which acts as the Proton donor; for beta-elimination activity. DNA is bound by residues histidine 103, arginine 122, and arginine 167. The segment at tryptophan 252–asparagine 286 adopts an FPG-type zinc-finger fold. The Proton donor; for delta-elimination activity role is filled by arginine 276.

The protein belongs to the FPG family. As to quaternary structure, monomer. It depends on Zn(2+) as a cofactor.

The catalysed reaction is Hydrolysis of DNA containing ring-opened 7-methylguanine residues, releasing 2,6-diamino-4-hydroxy-5-(N-methyl)formamidopyrimidine.. It catalyses the reaction 2'-deoxyribonucleotide-(2'-deoxyribose 5'-phosphate)-2'-deoxyribonucleotide-DNA = a 3'-end 2'-deoxyribonucleotide-(2,3-dehydro-2,3-deoxyribose 5'-phosphate)-DNA + a 5'-end 5'-phospho-2'-deoxyribonucleoside-DNA + H(+). In terms of biological role, involved in base excision repair of DNA damaged by oxidation or by mutagenic agents. Acts as a DNA glycosylase that recognizes and removes damaged bases. Has a preference for oxidized purines, such as 7,8-dihydro-8-oxoguanine (8-oxoG). Has AP (apurinic/apyrimidinic) lyase activity and introduces nicks in the DNA strand. Cleaves the DNA backbone by beta-delta elimination to generate a single-strand break at the site of the removed base with both 3'- and 5'-phosphates. The protein is Formamidopyrimidine-DNA glycosylase of Prochlorococcus marinus (strain MIT 9211).